The chain runs to 635 residues: Biosynthetic arginine decarboxylase (635 aa).

N6-(pyridoxal phosphate)lysine is present on lysine 100. Substrate is bound at residue 282–292 (LDIGGGLGVDY).

This sequence belongs to the Orn/Lys/Arg decarboxylase class-II family. SpeA subfamily. Requires Mg(2+) as cofactor. Pyridoxal 5'-phosphate serves as cofactor.

It carries out the reaction L-arginine + H(+) = agmatine + CO2. Its pathway is amine and polyamine biosynthesis; agmatine biosynthesis; agmatine from L-arginine: step 1/1. Catalyzes the biosynthesis of agmatine from arginine. The polypeptide is Biosynthetic arginine decarboxylase (Trichlorobacter lovleyi (strain ATCC BAA-1151 / DSM 17278 / SZ) (Geobacter lovleyi)).